Here is a 343-residue protein sequence, read N- to C-terminus: Dimethyladenosine transferase 1, mitochondrial (343 aa).

S-adenosyl-L-methionine-binding positions include 28-31 (QNFL), asparagine 29, leucine 31, glycine 56, glutamate 78, aspartate 133, and asparagine 169.

The protein belongs to the class I-like SAM-binding methyltransferase superfamily. rRNA adenine N(6)-methyltransferase family. KsgA subfamily.

It is found in the mitochondrion. Its function is as follows. Probable S-adenosyl-L-methionine-dependent methyltransferase which specifically dimethylates mitochondrial 12S rRNA at the conserved stem loop. Also required for basal transcription of mitochondrial DNA. Stimulates transcription independently of the methyltransferase activity. The protein is Dimethyladenosine transferase 1, mitochondrial of Vermamoeba vermiformis (Amoeba).